The chain runs to 628 residues: DNA mismatch repair protein MutL (628 aa).

The disordered stretch occupies residues 350-402 (GLPFDVSESQGNDNHINNGKSRETKSERELYERRPNPFENRLMKESNSPSVGK). The span at 356–368 (SESQGNDNHINNG) shows a compositional bias: polar residues. Residues 369–393 (KSRETKSERELYERRPNPFENRLMK) show a composition bias toward basic and acidic residues.

It belongs to the DNA mismatch repair MutL/HexB family.

In terms of biological role, this protein is involved in the repair of mismatches in DNA. It is required for dam-dependent methyl-directed DNA mismatch repair. May act as a 'molecular matchmaker', a protein that promotes the formation of a stable complex between two or more DNA-binding proteins in an ATP-dependent manner without itself being part of a final effector complex. The sequence is that of DNA mismatch repair protein MutL from Wolbachia sp. subsp. Brugia malayi (strain TRS).